The chain runs to 630 residues: Protein mono-ADP-ribosyltransferase PARP6 (630 aa).

Cys237 is subject to ADP-ribosylcysteine. In terms of domain architecture, PARP catalytic spans 394 to 620 (EMTQGSYLEI…QDPKIQKEIM (227 aa)). Asp600 carries the ADP-ribosyl aspartic acid modification.

It belongs to the ARTD/PARP family. In terms of processing, auto-mono-ADP-ribosylated.

The enzyme catalyses L-aspartyl-[protein] + NAD(+) = 4-O-(ADP-D-ribosyl)-L-aspartyl-[protein] + nicotinamide. It catalyses the reaction L-cysteinyl-[protein] + NAD(+) = S-(ADP-D-ribosyl)-L-cysteinyl-[protein] + nicotinamide + H(+). Its function is as follows. Mono-ADP-ribosyltransferase that mediates mono-ADP-ribosylation of target proteins. The chain is Protein mono-ADP-ribosyltransferase PARP6 from Homo sapiens (Human).